The following is a 270-amino-acid chain: tRNA pseudouridine synthase A (270 aa).

The Nucleophile role is filled by Asp-51. Tyr-109 lines the substrate pocket.

Belongs to the tRNA pseudouridine synthase TruA family. Homodimer.

The enzyme catalyses uridine(38/39/40) in tRNA = pseudouridine(38/39/40) in tRNA. Functionally, formation of pseudouridine at positions 38, 39 and 40 in the anticodon stem and loop of transfer RNAs. This Burkholderia orbicola (strain MC0-3) protein is tRNA pseudouridine synthase A.